The sequence spans 465 residues: E3 ubiquitin-protein ligase parkin (465 aa).

Residues 1–76 (MIVFVRFNSS…VHIVQRPWRK (76 aa)) form the Ubiquitin-like domain. Phosphoserine; by PINK1 is present on Ser-65. The interval 77–99 (GQEMNATGGDDPRNAAGGCEREP) is disordered. A necessary for PINK1-dependent localization to mitochondria region spans residues 77-237 (GQEMNATGGD…LIATNSRNIT (161 aa)). An RING-type 0; atypical zinc finger spans residues 141-225 (SIYNSFYVYC…PTSDKETSVA (85 aa)). Position 175 is a phosphothreonine; by PINK1 (Thr-175). The tract at residues 204–238 (TSAEFFFKCGAHPTSDKETSVALHLIATNSRNITC) is SYT11 binding 1. Thr-217 carries the phosphothreonine modification. The segment at 234 to 465 (RNITCITCTD…VCMGDHWFDV (232 aa)) is TRIAD supradomain. Residues Cys-238, Cys-241, Cys-253, His-257, Cys-260, Cys-263, Cys-289, Cys-293, Cys-332, and Cys-337 each coordinate Zn(2+). The RING-type 1 zinc-finger motif lies at 238–293 (CITCTDVRSPVLVFQCNSRHVICLDCFHLYCVTRLNDRQFVHDPQLGYSLPCVAGC). The tract at residues 257 to 293 (HVICLDCFHLYCVTRLNDRQFVHDPQLGYSLPCVAGC) is SYT11 binding 2. The IBR-type zinc-finger motif lies at 313-377 (NRYQQYGAEE…CKEAYHEGEC (65 aa)). Residue Lys-349 forms a Glycyl lysine isopeptide (Lys-Gly) (interchain with G-Cter in ISG15) linkage. Zn(2+)-binding residues include Cys-352, Cys-360, Cys-365, and Cys-368. Lys-369 participates in a covalent cross-link: Glycyl lysine isopeptide (Lys-Gly) (interchain with G-Cter in ISG15). Residues His-373 and Cys-377 each coordinate Zn(2+). The tract at residues 378 to 410 (SAVFEASGTTTQAYRVDERAAEQARWEAASKET) is REP. Residues Cys-418 and Cys-421 each contribute to the Zn(2+) site. Residues 418-449 (CPRCHVPVEKNGGCMHMKCPQPQCRLEWCWNC) form an RING-type 2; atypical zinc finger. The active site involves Cys-431. 6 residues coordinate Zn(2+): Cys-436, Cys-441, Cys-446, Cys-449, Cys-457, and His-461.

It belongs to the RBR family. Parkin subfamily. As to quaternary structure, forms an E3 ubiquitin ligase complex with UBE2L3 or UBE2L6. Mediates 'Lys-63'-linked polyubiquitination by associating with UBE2V1. Part of a SCF-like complex, consisting of PRKN, CUL1 and FBXW7. Interacts with SNCAIP. Binds to the C2A and C2B domains of SYT11. Interacts and regulates the turnover of SEPTIN5. Part of a complex, including STUB1, HSP70 and GPR37. The amount of STUB1 in the complex increases during ER stress. STUB1 promotes the dissociation of HSP70 from PRKN and GPR37, thus facilitating PRKN-mediated GPR37 ubiquitination. HSP70 transiently associates with unfolded GPR37 and inhibits the E3 activity of PRKN, whereas, STUB1 enhances the E3 activity of PRKN through promotion of dissociation of HSP70 from PRKN-GPR37 complexes. Interacts with PSMD4 and PACRG. Interacts with LRRK2. Interacts with RANBP2. Interacts with SUMO1 but not SUMO2, which promotes nuclear localization and autoubiquitination. Interacts (via first RING-type domain) with AIMP2 (via N-terminus). Interacts with PSMA7 and RNF41. Interacts with PINK1. Forms a complex with PINK1 and PARK7. Interacts with CHPF, the interaction with isoform 2 may facilitate PRKN transport into the mitochondria. Interacts with MFN2 (phosphorylated), promotes PRKN localization in dysfunctional depolarized mitochondria. Interacts with FBXO7; this promotes translocation to dysfunctional depolarized mitochondria. Interacts with ZNF746. Interacts with heat shock protein 70 family members, including HSPA1L, HSPA1A and HSPA8; interaction HSPA1L promotes translocation to damaged mitochondria. Interacts with BAG4 and, to a lesser extent, BAG5; interaction with BAG4 inhibits translocation to damaged mitochondria. Forms a complex with PRKN and PARK7. Interacts with AMBRA1. Post-translationally, ISGylated. Conjugated to ubiquitin-like protein ISG15 upon IFN-beta stimulation. ISGylation positively regulates its E3 ligase activity. Auto-ubiquitinates in an E2-dependent manner leading to its own degradation. Also polyubiquitinated by RNF41 for proteasomal degradation. In terms of processing, S-nitrosylated. The inhibition of PRKN ubiquitin E3 ligase activity by S-nitrosylation could contribute to the degenerative process in PD by impairing the ubiquitination of PRKN substrates. Post-translationally, phosphorylated. Activation requires phosphorylation at Ser-65 by PINK1 and binding to PINK1 phosphorylated ubiquitin. Phosphorylation at Thr-175 by PINK1 and at Thr-217 is important for mitochondrial localization. In terms of tissue distribution, highly expressed in the brain including the substantia nigra. Expressed in heart, testis and skeletal muscle. Expression is down-regulated or absent in tumor biopsies, and absent in the brain of PARK2 patients. Overexpression protects dopamine neurons from kainate-mediated apoptosis. Found in serum (at protein level).

It is found in the cytoplasm. It localises to the cytosol. Its subcellular location is the nucleus. The protein resides in the endoplasmic reticulum. The protein localises to the mitochondrion. It is found in the mitochondrion outer membrane. It localises to the cell projection. Its subcellular location is the neuron projection. The protein resides in the postsynaptic density. The protein localises to the presynapse. The enzyme catalyses [E2 ubiquitin-conjugating enzyme]-S-ubiquitinyl-L-cysteine + [acceptor protein]-L-lysine = [E2 ubiquitin-conjugating enzyme]-L-cysteine + [acceptor protein]-N(6)-ubiquitinyl-L-lysine.. Its pathway is protein modification; protein ubiquitination. Its activity is regulated as follows. In the autoinhibited state the side chain of Phe-463 inserts into a hydrophobic groove in RING-0, occluding the ubiquitin acceptor site Cys-431, whereas the REP repressor element binds RING-1 and blocks its E2-binding site. Activation of PRKN requires 2 steps: (1) phosphorylation at Ser-65 by PINK1 and (2) binding to phosphorylated ubiquitin, leading to unlock repression of the catalytic Cys-431 by the RING-0 region via an allosteric mechanism and converting PRKN to its fully-active form. According to another report, phosphorylation at Ser-65 by PINK1 is not essential for activation and only binding to phosphorylated ubiquitin is essential to unlock repression. In addition, ISG15 conjugation positively regulates its ubiquitin E3 ligase activity by suppressing the intramolecular interaction that maintains its autoinhibited conformation. In terms of biological role, functions within a multiprotein E3 ubiquitin ligase complex, catalyzing the covalent attachment of ubiquitin moieties onto substrate proteins. Substrates include SYT11 and VDAC1. Other substrates are BCL2, CCNE1, GPR37, RHOT1/MIRO1, MFN1, MFN2, STUB1, SNCAIP, SEPTIN5, TOMM20, USP30, ZNF746, MIRO1 and AIMP2. Mediates monoubiquitination as well as 'Lys-6', 'Lys-11', 'Lys-48'-linked and 'Lys-63'-linked polyubiquitination of substrates depending on the context. Participates in the removal and/or detoxification of abnormally folded or damaged protein by mediating 'Lys-63'-linked polyubiquitination of misfolded proteins such as PARK7: 'Lys-63'-linked polyubiquitinated misfolded proteins are then recognized by HDAC6, leading to their recruitment to aggresomes, followed by degradation. Mediates 'Lys-63'-linked polyubiquitination of a 22 kDa O-linked glycosylated isoform of SNCAIP, possibly playing a role in Lewy-body formation. Mediates monoubiquitination of BCL2, thereby acting as a positive regulator of autophagy. Protects against mitochondrial dysfunction during cellular stress, by acting downstream of PINK1 to coordinate mitochondrial quality control mechanisms that remove and replace dysfunctional mitochondrial components. Depending on the severity of mitochondrial damage and/or dysfunction, activity ranges from preventing apoptosis and stimulating mitochondrial biogenesis to regulating mitochondrial dynamics and eliminating severely damaged mitochondria via mitophagy. Activation and recruitment onto the outer membrane of damaged/dysfunctional mitochondria (OMM) requires PINK1-mediated phosphorylation of both PRKN and ubiquitin. After mitochondrial damage, functions with PINK1 to mediate the decision between mitophagy or preventing apoptosis by inducing either the poly- or monoubiquitination of VDAC1, respectively; polyubiquitination of VDAC1 promotes mitophagy, while monoubiquitination of VDAC1 decreases mitochondrial calcium influx which ultimately inhibits apoptosis. When cellular stress results in irreversible mitochondrial damage, promotes the autophagic degradation of dysfunctional depolarized mitochondria (mitophagy) by promoting the ubiquitination of mitochondrial proteins such as TOMM20, RHOT1/MIRO1, MFN1 and USP30. Preferentially assembles 'Lys-6'-, 'Lys-11'- and 'Lys-63'-linked polyubiquitin chains, leading to mitophagy. The PINK1-PRKN pathway also promotes fission of damaged mitochondria by PINK1-mediated phosphorylation which promotes the PRKN-dependent degradation of mitochondrial proteins involved in fission such as MFN2. This prevents the refusion of unhealthy mitochondria with the mitochondrial network or initiates mitochondrial fragmentation facilitating their later engulfment by autophagosomes. Regulates motility of damaged mitochondria via the ubiquitination and subsequent degradation of MIRO1 and MIRO2; in motor neurons, this likely inhibits mitochondrial intracellular anterograde transport along the axons which probably increases the chance of the mitochondria undergoing mitophagy in the soma. Involved in mitochondrial biogenesis via the 'Lys-48'-linked polyubiquitination of transcriptional repressor ZNF746/PARIS which leads to its subsequent proteasomal degradation and allows activation of the transcription factor PPARGC1A. Limits the production of reactive oxygen species (ROS). Regulates cyclin-E during neuronal apoptosis. In collaboration with CHPF isoform 2, may enhance cell viability and protect cells from oxidative stress. Independently of its ubiquitin ligase activity, protects from apoptosis by the transcriptional repression of p53/TP53. May protect neurons against alpha synuclein toxicity, proteasomal dysfunction, GPR37 accumulation, and kainate-induced excitotoxicity. May play a role in controlling neurotransmitter trafficking at the presynaptic terminal and in calcium-dependent exocytosis. May represent a tumor suppressor gene. The sequence is that of E3 ubiquitin-protein ligase parkin from Homo sapiens (Human).